The chain runs to 810 residues: F-BAR domain only protein 2 (810 aa).

Residues 3–250 (MAYFVENFWG…NMANTTVESL (248 aa)) form the F-BAR domain. A mediates dimerization and binding to membranes enriched in Pi(4,5)-P2 and induces their tubulation region spans residues 3-274 (MAYFVENFWG…PGLIEFEECD (272 aa)). Residues 87 to 156 (HLDLVRKLQE…CVEQERLKKE (70 aa)) adopt a coiled-coil conformation. K297 participates in a covalent cross-link: Glycyl lysine isopeptide (Lys-Gly) (interchain with G-Cter in SUMO2). Positions 301 to 352 (DAESVECPDADSLNIPDVDEEGYSIKPETNQNDTKENHFYSSSDSDSEDEEP) are disordered. S312 bears the Phosphoserine mark. A Phosphothreonine modification is found at T385. 3 positions are modified to phosphoserine: S387, S394, and S403. The disordered stretch occupies residues 403–537 (SNEELTKSKP…VSRGPSPVSL (135 aa)). Over residues 433 to 456 (PSLDSSSSSSLTSSSSARPTTPLS) the composition is skewed to low complexity. Phosphoserine occurs at positions 488, 493, 496, 508, 510, 511, and 533. Positions 502–521 (PLARAESSSSISSSASLSAA) are enriched in low complexity. Positions 521 to 810 (ANTPTVGVSR…FATGRYLADC (290 aa)) are mediates interaction with DAB2, EPS15, EPS15R and ITSN1. The MHD domain maps to 542–809 (TLPVAVALTE…RFATGRYLAD (268 aa)).

Belongs to the FCHO family. As to quaternary structure, homodimer; disulfide-linked. May form homotetramer. Interacts with AP2A1. Interacts with EPS15, EPS15R, ITSN1 and ITSN2; recruit those scaffolding proteins which in turn may interact with the adaptor protein complex AP-2 at the plasma membrane. Interacts with DAB2 (via DPF motifs); mediates LDL receptor/LDLR endocytosis. Ubiquitinated. Mainly undergoes monoubiquitination but also polyubiquitination.

The protein localises to the membrane. It is found in the clathrin-coated pit. Functionally, functions in an early step of clathrin-mediated endocytosis. Has both a membrane binding/bending activity and the ability to recruit proteins essential to the formation of functional clathrin-coated pits. Has a lipid-binding activity with a preference for membranes enriched in phosphatidylserine and phosphoinositides (Pi(4,5) biphosphate) like the plasma membrane. Its membrane-bending activity might be important for the subsequent action of clathrin and adaptors in the formation of clathrin-coated vesicles. Involved in adaptor protein complex AP-2-dependent endocytosis of the transferrin receptor, it also functions in the AP-2-independent endocytosis of the LDL receptor. The polypeptide is F-BAR domain only protein 2 (FCHO2) (Pongo abelii (Sumatran orangutan)).